Reading from the N-terminus, the 206-residue chain is MTFLTRYEELRAIKQEFAARDWFPGTSGNLAIRTNSSPTEFLVTASGKDKRQDTPDDFVHVDATGQLIGEQNGRPSAETLLHVEVFNRTTAGCSLHVHTVDNNVISELYGDRGEIRFRSQEIIKALGRWEEDAEVIVPIITNHADIPTLAADFAKHIRTESGAVLIRNHGITVWAPTAFEAKKQLEAFEFLFSYTLKLQACRQAIY.

Residues His96 and His98 each coordinate Zn(2+).

The protein belongs to the aldolase class II family. MtnB subfamily. It depends on Zn(2+) as a cofactor.

It carries out the reaction 5-(methylsulfanyl)-D-ribulose 1-phosphate = 5-methylsulfanyl-2,3-dioxopentyl phosphate + H2O. Its pathway is amino-acid biosynthesis; L-methionine biosynthesis via salvage pathway; L-methionine from S-methyl-5-thio-alpha-D-ribose 1-phosphate: step 2/6. Functionally, catalyzes the dehydration of methylthioribulose-1-phosphate (MTRu-1-P) into 2,3-diketo-5-methylthiopentyl-1-phosphate (DK-MTP-1-P). This is Methylthioribulose-1-phosphate dehydratase from Exiguobacterium sibiricum (strain DSM 17290 / CCUG 55495 / CIP 109462 / JCM 13490 / 255-15).